The following is a 380-amino-acid chain: Flap endonuclease 1 (380 aa).

Positions 1 to 104 are N-domain; sequence MGIQGLAKLI…GELAKRSERR (104 aa). Residue Arg19 is modified to Symmetric dimethylarginine; by PRMT5. Asp34 lines the Mg(2+) pocket. Residues Arg47 and Arg70 each coordinate DNA. Lys80 carries the N6-acetyllysine modification. Asp86 contacts Mg(2+). 2 positions are modified to symmetric dimethylarginine; by PRMT5: Arg100 and Arg104. Positions 122–253 are I-domain; sequence EVEKFTKRLV…KRAVDLIQKH (132 aa). Glu158, Glu160, Asp179, and Asp181 together coordinate Mg(2+). Glu158 contacts DNA. Ser187 bears the Phosphoserine; by CDK2 mark. Arg192 bears the Symmetric dimethylarginine; by PRMT5 mark. Ser197 carries the post-translational modification Phosphoserine. Gly231 and Asp233 together coordinate DNA. Asp233 is a binding site for Mg(2+). Residues Ser255, Ser293, and Ser335 each carry the phosphoserine modification. Positions 327 to 380 are disordered; the sequence is RLSKSRQGSTQGRLDDFFKVTGSLSSAKRKEPEPKGSTKKKAKTGAAGKFKRGK. Phosphothreonine is present on Thr336. Residues 336–344 are interaction with PCNA; that stretch reads TQGRLDDFF. Residue Lys354 is modified to N6-acetyllysine. Residues 363-380 show a composition bias toward basic residues; that stretch reads STKKKAKTGAAGKFKRGK. Thr364 carries the phosphothreonine modification. An N6-acetyllysine mark is found at Lys375, Lys377, and Lys380.

The protein belongs to the XPG/RAD2 endonuclease family. FEN1 subfamily. In terms of assembly, interacts with PCNA. Three molecules of FEN1 bind to one PCNA trimer with each molecule binding to one PCNA monomer. PCNA stimulates the nuclease activity without altering cleavage specificity. The C-terminal domain binds EP300; can bind simultaneously to both PCNA and EP300. Interacts with DDX11; this interaction is direct and increases flap endonuclease activity of FEN1. Interacts with WDR4; regulating its endonuclease activity. Interacts with POLB. Requires Mg(2+) as cofactor. Post-translationally, acetylated by EP300. Acetylation inhibits both endonuclease and exonuclease activity. Acetylation also reduces DNA-binding activity but does not affect interaction with PCNA or EP300. In terms of processing, phosphorylation upon DNA damage induces relocalization to the nuclear plasma. Phosphorylation at Ser-187 by CDK2 occurs during late S-phase and results in dissociation from PCNA. Methylation at Arg-192 by PRMT5 impedes Ser-187 phosphorylation and increases interaction with PCNA.

It is found in the nucleus. The protein resides in the nucleolus. The protein localises to the nucleoplasm. Its subcellular location is the mitochondrion. Structure-specific nuclease with 5'-flap endonuclease and 5'-3' exonuclease activities involved in DNA replication and repair. During DNA replication, cleaves the 5'-overhanging flap structure that is generated by displacement synthesis when DNA polymerase encounters the 5'-end of a downstream Okazaki fragment. It enters the flap from the 5'-end and then tracks to cleave the flap base, leaving a nick for ligation. Also involved in the long patch base excision repair (LP-BER) pathway, by cleaving within the apurinic/apyrimidinic (AP) site-terminated flap. Acts as a genome stabilization factor that prevents flaps from equilibrating into structures that lead to duplications and deletions. Also possesses 5'-3' exonuclease activity on nicked or gapped double-stranded DNA, and exhibits RNase H activity. Also involved in replication and repair of rDNA and in repairing mitochondrial DNA. The sequence is that of Flap endonuclease 1 from Homo sapiens (Human).